A 338-amino-acid chain; its full sequence is DNA-directed RNA polymerase subunit alpha (338 aa).

Positions 1-233 (MYKNWRELIK…EQLQIFINFD (233 aa)) are alpha N-terminal domain (alpha-NTD). Residues 250–338 (INENLYRSVE…KMIQEGKEDL (89 aa)) form an alpha C-terminal domain (alpha-CTD) region.

The protein belongs to the RNA polymerase alpha chain family. Homodimer. The RNAP catalytic core consists of 2 alpha, 1 beta, 1 beta' and 1 omega subunit. When a sigma factor is associated with the core the holoenzyme is formed, which can initiate transcription.

It carries out the reaction RNA(n) + a ribonucleoside 5'-triphosphate = RNA(n+1) + diphosphate. Functionally, DNA-dependent RNA polymerase catalyzes the transcription of DNA into RNA using the four ribonucleoside triphosphates as substrates. The sequence is that of DNA-directed RNA polymerase subunit alpha from Syntrophotalea carbinolica (strain DSM 2380 / NBRC 103641 / GraBd1) (Pelobacter carbinolicus).